The following is a 164-amino-acid chain: Respiratory growth induced protein 2 (164 aa).

This sequence belongs to the RGI1 family.

It is found in the cytoplasm. In terms of biological role, involved in the control of energetic metabolism and significantly contribute to cell fitness, especially under respiratory growth conditions. The sequence is that of Respiratory growth induced protein 2 (RGI2) from Saccharomyces cerevisiae (strain RM11-1a) (Baker's yeast).